A 312-amino-acid polypeptide reads, in one-letter code: Ribosomal protein L11 methyltransferase (312 aa).

4 residues coordinate S-adenosyl-L-methionine: T160, G181, D203, and N246.

Belongs to the methyltransferase superfamily. PrmA family.

It localises to the cytoplasm. It catalyses the reaction L-lysyl-[protein] + 3 S-adenosyl-L-methionine = N(6),N(6),N(6)-trimethyl-L-lysyl-[protein] + 3 S-adenosyl-L-homocysteine + 3 H(+). Its function is as follows. Methylates ribosomal protein L11. The polypeptide is Ribosomal protein L11 methyltransferase (Staphylococcus aureus (strain bovine RF122 / ET3-1)).